The following is a 56-amino-acid chain: uncharacterized protein (56 aa).

This is an uncharacterized protein from Acidianus convivator (ABV).